The chain runs to 513 residues: Histidine--tRNA ligase (513 aa).

Residues 1 to 24 (MADKAQLQEAIKTQGEVVRKLKSE) constitute a mitochondrion transit peptide. The WHEP-TRS domain maps to 3 to 59 (DKAQLQEAIKTQGEVVRKLKSEKASKEQIDEEVARLLQLKAQLGGDEGKHVFVLKTA). Residues 130–132 (DLT), arginine 157, glutamine 173, aspartate 177, arginine 326, and 330–331 (YY) each bind L-histidine.

This sequence belongs to the class-II aminoacyl-tRNA synthetase family.

The protein resides in the cytoplasm. The protein localises to the mitochondrion. It catalyses the reaction tRNA(His) + L-histidine + ATP = L-histidyl-tRNA(His) + AMP + diphosphate + H(+). In terms of biological role, catalyzes the aminoacylation of histidyl-tRNA. In Danio rerio (Zebrafish), this protein is Histidine--tRNA ligase.